The chain runs to 74 residues: Small heat shock protein hspG10 (74 aa).

In terms of domain architecture, sHSP spans 31–74; that stretch reads KTIIDILPSMDVTMTNDKLIIETELAGISKDHIEIDIKDSILTI.

This sequence belongs to the small heat shock protein (HSP20) family.

The chain is Small heat shock protein hspG10 (hspG10) from Dictyostelium discoideum (Social amoeba).